Consider the following 416-residue polypeptide: Gamma-glutamyl phosphate reductase (416 aa).

Belongs to the gamma-glutamyl phosphate reductase family.

It is found in the cytoplasm. The catalysed reaction is L-glutamate 5-semialdehyde + phosphate + NADP(+) = L-glutamyl 5-phosphate + NADPH + H(+). The protein operates within amino-acid biosynthesis; L-proline biosynthesis; L-glutamate 5-semialdehyde from L-glutamate: step 2/2. In terms of biological role, catalyzes the NADPH-dependent reduction of L-glutamate 5-phosphate into L-glutamate 5-semialdehyde and phosphate. The product spontaneously undergoes cyclization to form 1-pyrroline-5-carboxylate. This Actinobacillus succinogenes (strain ATCC 55618 / DSM 22257 / CCUG 43843 / 130Z) protein is Gamma-glutamyl phosphate reductase.